A 609-amino-acid chain; its full sequence is Sodium- and chloride-dependent GABA transporter 2 (609 aa).

Residues 1–13 (MDSRASGTASNGE) are compositionally biased toward polar residues. The segment at 1–23 (MDSRASGTASNGETKPVYPVMEK) is disordered. Topologically, residues 1–40 (MDSRASGTASNGETKPVYPVMEKEEEEGTLERGHWNNKME) are cytoplasmic. Transmembrane regions (helical) follow at residues 41–61 (FVLS…FPYL), 68–88 (GAFF…VFLL), and 121–141 (IVIL…FYLF). At 142 to 206 (SSFTIDLPWG…GIQHLGALRW (65 aa)) the chain is on the extracellular side. Residues C153 and C162 are joined by a disulfide bond. N-linked (GlcNAc...) asparagine glycosylation is found at N169 and N173. 2 helical membrane passes run 207 to 227 (ELAL…WKGV) and 233 to 253 (VVYF…IRGV). N269 carries an N-linked (GlcNAc...) asparagine glycan. Helical transmembrane passes span 282–302 (AGTQ…ALGS), 319–339 (FLNS…LGFM), 366–386 (VVML…VVLL), 418–438 (VLIL…LTEG), 453–473 (GMCL…VYGA), 490–510 (PLIK…TFLF), and 528–548 (WWGD…IPAW). Residues 549–609 (SLYRLGTLKG…LRLTELESHC (61 aa)) lie on the Cytoplasmic side of the membrane. A Phosphothreonine modification is found at T594. S598 carries the post-translational modification Phosphoserine.

Belongs to the sodium:neurotransmitter symporter (SNF) (TC 2.A.22) family. SLC6A13 subfamily.

The protein resides in the cell membrane. Its subcellular location is the basolateral cell membrane. The enzyme catalyses 4-aminobutanoate(out) + chloride(out) + 2 Na(+)(out) = 4-aminobutanoate(in) + chloride(in) + 2 Na(+)(in). The catalysed reaction is taurine(out) + chloride(out) + 2 Na(+)(out) = taurine(in) + chloride(in) + 2 Na(+)(in). It carries out the reaction beta-alanine(out) + chloride(out) + 2 Na(+)(out) = beta-alanine(in) + chloride(in) + 2 Na(+)(in). It catalyses the reaction hypotaurine(out) + chloride(out) + 2 Na(+)(out) = hypotaurine(in) + chloride(in) + 2 Na(+)(in). Functionally, mediates sodium- and chloride-dependent transport of gamma-aminobutyric acid (GABA). Can also mediate transport of beta-alanine, taurine and hypotaurine. The protein is Sodium- and chloride-dependent GABA transporter 2 (SLC6A13) of Macaca fascicularis (Crab-eating macaque).